A 201-amino-acid chain; its full sequence is tRNA (guanine-N(7)-)-methyltransferase (201 aa).

Positions 33, 58, 85, and 106 each coordinate S-adenosyl-L-methionine. Residue aspartate 106 is part of the active site. Residues lysine 110, aspartate 142, and 180–183 (TTYE) contribute to the substrate site.

Belongs to the class I-like SAM-binding methyltransferase superfamily. TrmB family.

The enzyme catalyses guanosine(46) in tRNA + S-adenosyl-L-methionine = N(7)-methylguanosine(46) in tRNA + S-adenosyl-L-homocysteine. The protein operates within tRNA modification; N(7)-methylguanine-tRNA biosynthesis. In terms of biological role, catalyzes the formation of N(7)-methylguanine at position 46 (m7G46) in tRNA. The polypeptide is tRNA (guanine-N(7)-)-methyltransferase (Mesomycoplasma hyopneumoniae (strain 7448) (Mycoplasma hyopneumoniae)).